The following is a 102-amino-acid chain: MFAVIKTGGKQYRVATNDVITVEKLEAAAGESVTFPVLLLSGETTLVGAPLVEGASVTAEVVEQTRGEKVIAFKKRRRQNSRRKRGHRQDLTVVRITEIATA.

This sequence belongs to the bacterial ribosomal protein bL21 family. Part of the 50S ribosomal subunit. Contacts protein L20.

Functionally, this protein binds to 23S rRNA in the presence of protein L20. The chain is Large ribosomal subunit protein bL21 from Azorhizobium caulinodans (strain ATCC 43989 / DSM 5975 / JCM 20966 / LMG 6465 / NBRC 14845 / NCIMB 13405 / ORS 571).